We begin with the raw amino-acid sequence, 210 residues long: Putative 3-methyladenine DNA glycosylase (210 aa).

It belongs to the DNA glycosylase MPG family.

The polypeptide is Putative 3-methyladenine DNA glycosylase (Lactobacillus acidophilus (strain ATCC 700396 / NCK56 / N2 / NCFM)).